The following is a 122-amino-acid chain: Large ribosomal subunit protein bL12 (122 aa).

This sequence belongs to the bacterial ribosomal protein bL12 family. In terms of assembly, homodimer. Part of the ribosomal stalk of the 50S ribosomal subunit. Forms a multimeric L10(L12)X complex, where L10 forms an elongated spine to which 2 to 4 L12 dimers bind in a sequential fashion. Binds GTP-bound translation factors.

Functionally, forms part of the ribosomal stalk which helps the ribosome interact with GTP-bound translation factors. Is thus essential for accurate translation. The protein is Large ribosomal subunit protein bL12 of Shewanella woodyi (strain ATCC 51908 / MS32).